A 282-amino-acid chain; its full sequence is MVLIRVLASLLILQLSYSKSLDDGAKESAYDDEIQQSSWGNSTVNTTLTETVVIQLIMGGSECYKSKHPFLVYLYNSAGFFCSGTLLNHEWVLTAAHCNRDDIQLKLGVHNVHVHYEDEQIRVPKEKLCCLSTKNCTQWSQDIMLIRLNSSVNNSKHIEPLSLPSRPPSMGSDCTVMGWGTITSPKVTYPKVPHCVDIKILHNPVCQAAYPTMSRKNILCAGVLEGGKDSCKGDSGGPLICDGQIQGIVSWGRFPCAQLLEPGVYTKVFDYIDWIRGIIAGN.

Positions 1 to 18 (MVLIRVLASLLILQLSYS) are cleaved as a signal peptide. The propeptide occupies 19–56 (KSLDDGAKESAYDDEIQQSSWGNSTVNTTLTETVVIQL). N-linked (GlcNAc...) asparagine glycans are attached at residues N41 and N45. In terms of domain architecture, Peptidase S1 spans 57-280 (IMGGSECYKS…YIDWIRGIIA (224 aa)). Cystine bridges form between C63/C195, C82/C98, C174/C241, C206/C220, and C231/C256. The active-site Charge relay system is the H97. N135 carries N-linked (GlcNAc...) asparagine glycosylation. D142 acts as the Charge relay system in catalysis. 2 N-linked (GlcNAc...) asparagine glycosylation sites follow: N149 and N153. Catalysis depends on S235, which acts as the Charge relay system.

It belongs to the peptidase S1 family. Snake venom subfamily. Monomer. In terms of tissue distribution, expressed by the venom gland.

The protein localises to the secreted. Its function is as follows. Snake venom serine protease that may act in the hemostasis system of the prey. The protein is Snake venom serine protease NaSP of Naja atra (Chinese cobra).